The chain runs to 455 residues: Vimentin (455 aa).

Residues 1 to 87 (MASRTNTSSY…GLADAINTEF (87 aa)) form a head region. Residues 87–122 (FKTNRTNEKAEMQHLNDRFASYIDKVRFLEQQNKIL) are a coiled coil. A coil 1A region spans residues 88–122 (KTNRTNEKAEMQHLNDRFASYIDKVRFLEQQNKIL). The region spanning 94–402 (EKAEMQHLND…KLLEGEESRI (309 aa)) is the IF rod domain. Residues 123 to 144 (IAELEQMRGKGSSRVGDLYQDE) are linker 1. Residues 145–236 (MRELRRQVDQ…KLHDEELAEL (92 aa)) adopt a coiled-coil conformation. Residues 145 to 236 (MRELRRQVDQ…KLHDEELAEL (92 aa)) form a coil 1B region. The tract at residues 237–259 (QIQIQEQHVQIDMEVAKPDLTAA) is linker 12. Residues 260 to 398 (LKDVRQQYET…ATYRKLLEGE (139 aa)) form a coil 2 region. A coiled-coil region spans residues 294–398 (ARNNEAIRLA…ATYRKLLEGE (105 aa)). The tail stretch occupies residues 399-455 (ESRITTPFPNLSSLTLRETMKETRPAMDSLSKKVVIKTIETRDGHIINESSQNDDLE).

This sequence belongs to the intermediate filament family. As to quaternary structure, homomer assembled from elementary dimers. One of the most prominent phosphoproteins in various cells of mesenchymal origin. Phosphorylation is enhanced during cell division, at which time vimentin filaments are significantly reorganized.

The protein resides in the cytoplasm. It localises to the cytoskeleton. The protein localises to the nucleus matrix. Functionally, vimentins are class-III intermediate filaments found in various non-epithelial cells, especially mesenchymal cells. Vimentin is attached to the nucleus, endoplasmic reticulum, and mitochondria, either laterally or terminally. The protein is Vimentin (vim) of Cyprinus carpio (Common carp).